The primary structure comprises 369 residues: Ribonuclease D (369 aa).

In terms of domain architecture, 3'-5' exonuclease spans 1 to 166; sequence MITTNDALAA…PIAHKLMEQV (166 aa). Residues 206–285 form the HRDC domain; it reads RPRQLACLKL…AQAQALLEDA (80 aa).

The protein belongs to the RNase D family. The cofactor is a divalent metal cation.

It localises to the cytoplasm. The enzyme catalyses Exonucleolytic cleavage that removes extra residues from the 3'-terminus of tRNA to produce 5'-mononucleotides.. Exonuclease involved in the 3' processing of various precursor tRNAs. Initiates hydrolysis at the 3'-terminus of an RNA molecule and releases 5'-mononucleotides. In Cronobacter turicensis (strain DSM 18703 / CCUG 55852 / LMG 23827 / z3032), this protein is Ribonuclease D.